A 269-amino-acid polypeptide reads, in one-letter code: Thiazole synthase (269 aa).

K109 functions as the Schiff-base intermediate with DXP in the catalytic mechanism. Residues G170, A196–G197, and N218–T219 each bind 1-deoxy-D-xylulose 5-phosphate.

It belongs to the ThiG family. As to quaternary structure, homotetramer. Forms heterodimers with either ThiH or ThiS.

It localises to the plastid. The protein resides in the chloroplast. The catalysed reaction is [ThiS sulfur-carrier protein]-C-terminal-Gly-aminoethanethioate + 2-iminoacetate + 1-deoxy-D-xylulose 5-phosphate = [ThiS sulfur-carrier protein]-C-terminal Gly-Gly + 2-[(2R,5Z)-2-carboxy-4-methylthiazol-5(2H)-ylidene]ethyl phosphate + 2 H2O + H(+). Its pathway is cofactor biosynthesis; thiamine diphosphate biosynthesis. In terms of biological role, catalyzes the rearrangement of 1-deoxy-D-xylulose 5-phosphate (DXP) to produce the thiazole phosphate moiety of thiamine. Sulfur is provided by the thiocarboxylate moiety of the carrier protein ThiS. In vitro, sulfur can be provided by H(2)S. The polypeptide is Thiazole synthase (Thalassiosira pseudonana (Marine diatom)).